The following is a 76-amino-acid chain: Sec-independent protein translocase protein TatA (76 aa).

Residues Met-1–Gly-21 traverse the membrane as a helical segment. Residues Lys-40–Ala-76 form a disordered region. Over residues Asn-64–Ala-76 the composition is skewed to basic and acidic residues.

This sequence belongs to the TatA/E family. The Tat system comprises two distinct complexes: a TatABC complex, containing multiple copies of TatA, TatB and TatC subunits, and a separate TatA complex, containing only TatA subunits. Substrates initially bind to the TatABC complex, which probably triggers association of the separate TatA complex to form the active translocon.

The protein resides in the cell inner membrane. In terms of biological role, part of the twin-arginine translocation (Tat) system that transports large folded proteins containing a characteristic twin-arginine motif in their signal peptide across membranes. TatA could form the protein-conducting channel of the Tat system. This Burkholderia ambifaria (strain MC40-6) protein is Sec-independent protein translocase protein TatA.